Reading from the N-terminus, the 112-residue chain is MAELGQKHALEMVRTDGADEGCVTFVLNEEDHTLGNSLRYMIMKSQDVEFCGYSITHPSESKINFRIQTRDGVPASEPLRNGLNNLTDVCKHVLQTFEARMKEFKEQEESMT.

The protein belongs to the archaeal Rpo11/eukaryotic RPB11/RPC19 RNA polymerase subunit family. In terms of assembly, component of the RNA polymerase I (Pol I) and RNA polymerase III (Pol III) complexes consisting of at least 13 and 17 subunits, respectively.

The protein resides in the nucleus. DNA-dependent RNA polymerase catalyzes the transcription of DNA into RNA using the four ribonucleoside triphosphates as substrates. Common core component of RNA polymerases I and III which synthesize ribosomal RNA precursors and small RNAs, such as 5S rRNA and tRNAs, respectively. This is DNA-directed RNA polymerases I and III subunit RPAC2 (polr1d) from Danio rerio (Zebrafish).